Reading from the N-terminus, the 883-residue chain is Pyruvate, phosphate dikinase 2 (883 aa).

A disordered region spans residues 1–21 (MAPAPCGRSSQRVFHFGKGKS). Histidine 465 functions as the Tele-phosphohistidine intermediate in the catalytic mechanism. 7 residues coordinate substrate: arginine 571, arginine 628, glutamate 757, glycine 778, threonine 779, asparagine 780, and aspartate 781. Position 757 (glutamate 757) interacts with Mg(2+). Position 781 (aspartate 781) interacts with Mg(2+). Catalysis depends on cysteine 843, which acts as the Proton donor.

Belongs to the PEP-utilizing enzyme family. The cofactor is Mg(2+). As to expression, expressed in leaves, roots and stems.

The protein resides in the cytoplasm. The catalysed reaction is pyruvate + phosphate + ATP = phosphoenolpyruvate + AMP + diphosphate + H(+). Formation of phosphoenolpyruvate, which is the primary acceptor of CO(2) in C4 and some Crassulacean acid metabolism plants. The sequence is that of Pyruvate, phosphate dikinase 2 from Zea mays (Maize).